Consider the following 147-residue polypeptide: Phospholipase A2 SSD387 (147 aa).

The N-terminal stretch at 1 to 19 is a signal peptide; the sequence is MSPKFLLFSIIAVWSCAAA. The propeptide occupies 20–28; the sequence is IEALFIQPR. 5 cysteine pairs are disulfide-bonded: cysteine 55-cysteine 71, cysteine 70-cysteine 130, cysteine 77-cysteine 123, cysteine 86-cysteine 116, and cysteine 109-cysteine 121. 2 residues coordinate Ca(2+): glycine 56 and glycine 58. The active site involves histidine 74. Aspartate 75 is a Ca(2+) binding site. Aspartate 124 is an active-site residue.

The cofactor is Ca(2+). In terms of tissue distribution, expressed by the venom gland.

The protein localises to the secreted. The catalysed reaction is a 1,2-diacyl-sn-glycero-3-phosphocholine + H2O = a 1-acyl-sn-glycero-3-phosphocholine + a fatty acid + H(+). In terms of biological role, PLA2 catalyzes the calcium-dependent hydrolysis of the 2-acyl groups in 3-sn-phosphoglycerides. This Scolopendra dehaani (Thai centipede) protein is Phospholipase A2 SSD387.